Here is an 85-residue protein sequence, read N- to C-terminus: MTNAELFGEGINLMISGMGFVLLFLIVLIYAISFISTLINKYFPEPIPAPVAKPVPSAVPTDNLDHLRPVIAAAIAHHRRQQGLK.

The chain crosses the membrane as a helical span at residues 15-35 (ISGMGFVLLFLIVLIYAISFI).

Belongs to the OadG family. In terms of assembly, heterotrimer of an alpha, a beta and a gamma subunit. The cofactor is Na(+).

The protein localises to the cell membrane. The enzyme catalyses oxaloacetate + 2 Na(+)(in) + H(+) = pyruvate + 2 Na(+)(out) + CO2. Its function is as follows. Catalyzes the decarboxylation of oxaloacetate coupled to Na(+) translocation. This is Probable oxaloacetate decarboxylase gamma chain from Actinobacillus pleuropneumoniae serotype 5b (strain L20).